We begin with the raw amino-acid sequence, 240 residues long: Ribonuclease PH (240 aa).

Phosphate contacts are provided by residues Arg-87 and 125–127 (GTR).

It belongs to the RNase PH family. As to quaternary structure, homohexameric ring arranged as a trimer of dimers.

It carries out the reaction tRNA(n+1) + phosphate = tRNA(n) + a ribonucleoside 5'-diphosphate. Functionally, phosphorolytic 3'-5' exoribonuclease that plays an important role in tRNA 3'-end maturation. Removes nucleotide residues following the 3'-CCA terminus of tRNAs; can also add nucleotides to the ends of RNA molecules by using nucleoside diphosphates as substrates, but this may not be physiologically important. Probably plays a role in initiation of 16S rRNA degradation (leading to ribosome degradation) during starvation. This Stutzerimonas stutzeri (strain A1501) (Pseudomonas stutzeri) protein is Ribonuclease PH.